The following is a 68-amino-acid chain: Protein ShdD (68 aa).

Its function is as follows. Involved in the non-oxidative decarboxylation and detoxification of phenolic derivatives under anaerobic conditions, however the precise biochemical function of ShdD in metabolism of phenolic acid is unknown. The sequence is that of Protein ShdD from Sedimentibacter hydroxybenzoicus (Clostridium hydroxybenzoicum).